A 91-amino-acid chain; its full sequence is C-C motif chemokine 5 (91 aa).

A signal peptide spans 1–23; it reads MKVSATAFAVLLMAAALCAPASA. 2 disulfides stabilise this stretch: Cys33-Cys57 and Cys34-Cys73.

This sequence belongs to the intercrine beta (chemokine CC) family.

Its subcellular location is the secreted. In terms of biological role, chemoattractant for blood monocytes, memory T-helper cells and eosinophils. Causes the release of histamine from basophils and activates eosinophils. May activate several chemokine receptors including CCR1, CCR3, CCR4 and CCR5. May also be an agonist of the G protein-coupled receptor GPR75. Together with GPR75, may play a role in neuron survival through activation of a downstream signaling pathway involving the PI3, Akt and MAP kinases. By activating GPR75 may also play a role in insulin secretion by islet cells. This is C-C motif chemokine 5 (CCL5) from Bos taurus (Bovine).